We begin with the raw amino-acid sequence, 278 residues long: 4-deoxy-L-threo-5-hexosulose-uronate ketol-isomerase (278 aa).

Zn(2+)-binding residues include histidine 196, histidine 198, glutamate 203, and histidine 245.

It belongs to the KduI family. Requires Zn(2+) as cofactor.

It carries out the reaction 5-dehydro-4-deoxy-D-glucuronate = 3-deoxy-D-glycero-2,5-hexodiulosonate. The protein operates within glycan metabolism; pectin degradation; 2-dehydro-3-deoxy-D-gluconate from pectin: step 4/5. In terms of biological role, catalyzes the isomerization of 5-dehydro-4-deoxy-D-glucuronate to 3-deoxy-D-glycero-2,5-hexodiulosonate. The protein is 4-deoxy-L-threo-5-hexosulose-uronate ketol-isomerase of Shigella boydii serotype 4 (strain Sb227).